The following is a 777-amino-acid chain: Degenerin unc-8 (777 aa).

Residues 1-128 (MSPLLTWNLI…VATSSFFGRY (128 aa)) lie on the Cytoplasmic side of the membrane. Residues 129–149 (VWAALFMCMLMAFLLQTYWTM) traverse the membrane as a helical segment. The Extracellular portion of the chain corresponds to 150–689 (SEYLQYRTII…KETAGYTLVN (540 aa)). Residues asparagine 274, asparagine 319, asparagine 357, asparagine 411, asparagine 453, asparagine 533, and asparagine 597 are each glycosylated (N-linked (GlcNAc...) asparagine). Residues 690-710 (LFSDFGGNIGLWIGFSVITFA) traverse the membrane as a helical segment. The Cytoplasmic segment spans residues 711–777 (EFAELFCEIC…NESTKELMSK (67 aa)). The interval 752–777 (QRSPKKSQPGEDEVSTNESTKELMSK) is disordered.

It belongs to the amiloride-sensitive sodium channel (TC 1.A.6) family.

It is found in the membrane. Its function is as follows. Sodium permeable non-voltage-sensitive ion channel. Involved in the activity-dependent removal of selected presynaptic proteins, such as synaptobrevin snb-1, and Ras-related rab-3, in the remodeling of GABAergic motor neurons. This Caenorhabditis elegans protein is Degenerin unc-8.